Here is a 460-residue protein sequence, read N- to C-terminus: Nuclear distribution protein PAC1-1 (460 aa).

The region spanning 9–41 (QADELHRALIAYLTAANLPNTAAALREELNLGE) is the LisH domain. Positions 74–96 (LVTQIMDLESRNHILQSELDNAT) form a coiled coil. The segment covering 90–100 (SELDNATPTSR) has biased composition (polar residues). Residues 90–115 (SELDNATPTSRQNKDPVAWLPRAPPR) form a disordered region. 8 WD repeats span residues 120 to 161 (SHRD…RTIK), 163 to 203 (HTKA…KNIR), 207 to 247 (GHDH…CVKT), 250 to 289 (GHAEWVRDVCPSFDGKYILSTSDDYTSRLWDVTVTNPEPR), 294 to 354 (GHEH…KTLA), 355 to 394 (GHDNWVRGLVFHPGGKYLLSVSDDKTLRCWDLTQEGKCVK), 399 to 439 (AHGH…VTPD), and 441 to 460 (QIRCVIATGSVDLNVRIFAN).

This sequence belongs to the WD repeat LIS1/nudF family. As to quaternary structure, self-associates. Interacts with NDL1 and dynein.

The protein resides in the cytoplasm. The protein localises to the cytoskeleton. It is found in the spindle pole. Functionally, positively regulates the activity of the minus-end directed microtubule motor protein dynein. May enhance dynein-mediated microtubule sliding by targeting dynein to the microtubule plus end. Required for nuclear migration during vegetative growth as well as development. Required for retrograde early endosome (EE) transport from the hyphal tip. Required for localization of dynein to the mitotic spindle poles. Recruits additional proteins to the dynein complex at SPBs. This is Nuclear distribution protein PAC1-1 from Sordaria macrospora (strain ATCC MYA-333 / DSM 997 / K(L3346) / K-hell).